A 1198-amino-acid chain; its full sequence is Fibronectin type-III domain-containing protein 3A (1198 aa).

The span at 188-201 (KKLKDRQGTQKDKM) shows a compositional bias: basic and acidic residues. The tract at residues 188 to 257 (KKLKDRQGTQ…VDPEMEEKDE (70 aa)) is disordered. Residues Ser203, Ser207, and Ser213 each carry the phosphoserine modification. Fibronectin type-III domains are found at residues 268-369 (NIVK…TLSC), 373-465 (PPNA…TSGC), 469-562 (VPAS…TCPD), 566-660 (VPVK…TPAV), 664-757 (PCLP…TAPG), 761-851 (QCRP…TPPS), 863-950 (SDDD…TKPL), 951-1045 (PPDP…TPKS), and 1049-1151 (ALKA…TEPP). Lys384 carries the post-translational modification N6-acetyllysine. The chain crosses the membrane as a helical span at residues 1177-1197 (ILVVFAFFSILIAFIIQYFVI).

The protein belongs to the FNDC3 family. In terms of tissue distribution, testis. Localizes to the acrosome of spermatids, as well as to Leydig cells. Can be detected on the acrosome beginning at steps 2-3 and continuing until step 12 of spermiogenesis.

Its subcellular location is the golgi apparatus membrane. Its function is as follows. Mediates spermatid-Sertoli adhesion during spermatogenesis. This chain is Fibronectin type-III domain-containing protein 3A (Fndc3a), found in Mus musculus (Mouse).